A 359-amino-acid polypeptide reads, in one-letter code: Anhydro-N-acetylmuramic acid kinase (359 aa).

Residue 12-19 (GTSLDGVD) coordinates ATP.

This sequence belongs to the anhydro-N-acetylmuramic acid kinase family.

It catalyses the reaction 1,6-anhydro-N-acetyl-beta-muramate + ATP + H2O = N-acetyl-D-muramate 6-phosphate + ADP + H(+). The protein operates within amino-sugar metabolism; 1,6-anhydro-N-acetylmuramate degradation. Its pathway is cell wall biogenesis; peptidoglycan recycling. Its function is as follows. Catalyzes the specific phosphorylation of 1,6-anhydro-N-acetylmuramic acid (anhMurNAc) with the simultaneous cleavage of the 1,6-anhydro ring, generating MurNAc-6-P. Is required for the utilization of anhMurNAc either imported from the medium or derived from its own cell wall murein, and thus plays a role in cell wall recycling. The chain is Anhydro-N-acetylmuramic acid kinase from Sulfurovum sp. (strain NBC37-1).